The primary structure comprises 425 residues: Serine--tRNA ligase (425 aa).

Disordered regions lie at residues 43-68 and 108-131; these read QRSS…GSDP and LPNL…RHCW. Basic and acidic residues predominate over residues 117 to 131; it reads PEGRDENDNQERHCW. 233 to 235 lines the L-serine pocket; that stretch reads TAE. Position 264–266 (264–266) interacts with ATP; sequence RRE. Glu287 is a binding site for L-serine. 351–354 is a binding site for ATP; it reads EISS. Ser385 is an L-serine binding site.

The protein belongs to the class-II aminoacyl-tRNA synthetase family. Type-1 seryl-tRNA synthetase subfamily. As to quaternary structure, homodimer. The tRNA molecule binds across the dimer.

It is found in the cytoplasm. The enzyme catalyses tRNA(Ser) + L-serine + ATP = L-seryl-tRNA(Ser) + AMP + diphosphate + H(+). It catalyses the reaction tRNA(Sec) + L-serine + ATP = L-seryl-tRNA(Sec) + AMP + diphosphate + H(+). It participates in aminoacyl-tRNA biosynthesis; selenocysteinyl-tRNA(Sec) biosynthesis; L-seryl-tRNA(Sec) from L-serine and tRNA(Sec): step 1/1. Its function is as follows. Catalyzes the attachment of serine to tRNA(Ser). Is also able to aminoacylate tRNA(Sec) with serine, to form the misacylated tRNA L-seryl-tRNA(Sec), which will be further converted into selenocysteinyl-tRNA(Sec). This is Serine--tRNA ligase from Prochlorococcus marinus (strain MIT 9303).